The sequence spans 1360 residues: Probable inactive protein kinase DDB_G0270444 (1360 aa).

WD repeat units follow at residues 44 to 83, 109 to 152, 166 to 205, and 208 to 247; these read SSKRPITFVIYDEEGNQFITGEDDFFIRLYNEDGTYIKQL, IRNI…AVYN, TTSAGITALTFDPTNLLVISGTSDGIVRKHSLRERVIMGT, and GHSRGAILNLLLTKHGHLLSSSMDRTIRLWDIDSGKQITG. Residues 636-954 form the Protein kinase domain; that stretch reads EKSIQTYLSN…IEQALSHPFI (319 aa). Positions 959-979 are enriched in low complexity; sequence KQQQQQQQQKQQQQQQQQQQQ. Disordered stretches follow at residues 959–989, 1258–1311, and 1331–1360; these read KQQQQQQQQKQQQQQQQQQQQEIIPKDDSLT, IISE…VEEE, and EVEEEIEVEEEIEVEEEIQVEDDTDKSNDF. Coiled-coil stretches lie at residues 1014-1269 and 1297-1352; these read SKIK…QEGE and NASD…QVED. Residues 1291-1300 show a composition bias toward basic and acidic residues; it reads LERDNKNASD. Composition is skewed to acidic residues over residues 1301-1311 and 1331-1354; these read HDDEQQFVEEE and EVEEEIEVEEEIEVEEEIQVEDDT.

It belongs to the protein kinase superfamily. CMGC Ser/Thr protein kinase family.

In Dictyostelium discoideum (Social amoeba), this protein is Probable inactive protein kinase DDB_G0270444.